The chain runs to 133 residues: DCPSGWSSYEGNCYKFFQQKMNWADAERFCSEQAKGGHLVSIKIYSKEKDFVGDLVTKNIQSSDLYAWIGLRVENKEKQCSSEWSDGSSVSYENVVERTVKKCFALEKDLGFVLWINLYCAQKNPFVCKSPPP.

3 disulfide bridges follow: C2/C13, C30/C128, and C103/C120. The region spanning 9–129 is the C-type lectin domain; sequence YEGNCYKFFQ…CAQKNPFVCK (121 aa).

This sequence belongs to the snaclec family. Heterodimer of subunits alpha and beta; disulfide-linked. Botrocetin and vWF form a soluble complex. In terms of tissue distribution, expressed by the venom gland.

It localises to the secreted. Its function is as follows. Snaclec that binds to von Willebrand factor (VWF) and induces its interaction with GPIbalpha (GP1BA) (via the vWF A1 domain), resulting in platelet aggregation. The protein is Snaclec botrocetin subunit alpha of Bothrops jararaca (Jararaca).